The primary structure comprises 130 residues: Small ribosomal subunit protein uS8 (130 aa).

Belongs to the universal ribosomal protein uS8 family. Part of the 30S ribosomal subunit.

Its function is as follows. One of the primary rRNA binding proteins, it binds directly to 16S rRNA central domain where it helps coordinate assembly of the platform of the 30S subunit. The polypeptide is Small ribosomal subunit protein uS8 (Haloquadratum walsbyi (strain DSM 16790 / HBSQ001)).